We begin with the raw amino-acid sequence, 286 residues long: ATP synthase gamma chain (286 aa).

It belongs to the ATPase gamma chain family. F-type ATPases have 2 components, CF(1) - the catalytic core - and CF(0) - the membrane proton channel. CF(1) has five subunits: alpha(3), beta(3), gamma(1), delta(1), epsilon(1). CF(0) has three main subunits: a, b and c.

Its subcellular location is the cell membrane. Produces ATP from ADP in the presence of a proton gradient across the membrane. The gamma chain is believed to be important in regulating ATPase activity and the flow of protons through the CF(0) complex. The polypeptide is ATP synthase gamma chain (Malacoplasma penetrans (strain HF-2) (Mycoplasma penetrans)).